The chain runs to 432 residues: Alpha-galactosidase (432 aa).

2–68 (KKITFIGAGS…PSVAINSYDD (67 aa)) contacts NAD(+). Asparagine 148 is a substrate binding site. Position 169 (cysteine 169) interacts with Mn(2+). Histidine 170 functions as the Proton donor in the catalytic mechanism. Histidine 199 is a Mn(2+) binding site.

The protein belongs to the glycosyl hydrolase 4 family. In terms of assembly, homodimer. Requires Mn(2+) as cofactor. NAD(+) is required as a cofactor.

The protein resides in the cytoplasm. The catalysed reaction is Hydrolysis of terminal, non-reducing alpha-D-galactose residues in alpha-D-galactosides, including galactose oligosaccharides, galactomannans and galactolipids.. Its function is as follows. Catalyzes the hydrolysis of melibiose and alpha-galactosides of the raffinose family of oligosaccharides (RFOs) such as raffinose and stachyose. Cannot act on polymeric substrates such as locust bean gum. The sequence is that of Alpha-galactosidase from Bacillus subtilis (strain 168).